Here is a 124-residue protein sequence, read N- to C-terminus: Small ribosomal subunit protein uS12 (124 aa).

The residue at position 89 (D89) is a 3-methylthioaspartic acid. Residues 102–124 (LDTSGVNNRKHGRSKYGTKRPKS) are disordered. Over residues 109–124 (NRKHGRSKYGTKRPKS) the composition is skewed to basic residues.

This sequence belongs to the universal ribosomal protein uS12 family. As to quaternary structure, part of the 30S ribosomal subunit. Contacts proteins S8 and S17. May interact with IF1 in the 30S initiation complex.

In terms of biological role, with S4 and S5 plays an important role in translational accuracy. Interacts with and stabilizes bases of the 16S rRNA that are involved in tRNA selection in the A site and with the mRNA backbone. Located at the interface of the 30S and 50S subunits, it traverses the body of the 30S subunit contacting proteins on the other side and probably holding the rRNA structure together. The combined cluster of proteins S8, S12 and S17 appears to hold together the shoulder and platform of the 30S subunit. This Francisella tularensis subsp. tularensis (strain FSC 198) protein is Small ribosomal subunit protein uS12.